We begin with the raw amino-acid sequence, 583 residues long: Lipoprotein LpqB (583 aa).

The first 29 residues, 1–29 (MSNKTTEATKTTKVKKVLSVVAGLGLLAG), serve as a signal peptide directing secretion. Cys-30 carries N-palmitoyl cysteine lipidation. Residue Cys-30 is the site of S-diacylglycerol cysteine attachment. Residues 38–63 (NPEAISSYAPAPSGQEAPTPTDGQPS) form a disordered region.

It belongs to the LpqB lipoprotein family.

Its subcellular location is the cell membrane. In Corynebacterium jeikeium (strain K411), this protein is Lipoprotein LpqB.